Here is a 1134-residue protein sequence, read N- to C-terminus: Error-prone DNA polymerase (1134 aa).

Positions 1 to 33 (MSYHNPPIPWRELEGRISGRPAPHGHQESHADQ) are disordered.

The protein belongs to the DNA polymerase type-C family. DnaE2 subfamily.

It localises to the cytoplasm. The enzyme catalyses DNA(n) + a 2'-deoxyribonucleoside 5'-triphosphate = DNA(n+1) + diphosphate. Its function is as follows. DNA polymerase involved in damage-induced mutagenesis and translesion synthesis (TLS). It is not the major replicative DNA polymerase. In Cutibacterium acnes (strain DSM 16379 / KPA171202) (Propionibacterium acnes), this protein is Error-prone DNA polymerase.